Consider the following 507-residue polypeptide: Light-independent protochlorophyllide reductase subunit B (507 aa).

Aspartate 36 contacts [4Fe-4S] cluster. Residue aspartate 293 is the Proton donor of the active site. Substrate is bound at residue 428 to 429 (GM).

It belongs to the ChlB/BchB/BchZ family. In terms of assembly, protochlorophyllide reductase is composed of three subunits; ChlL, ChlN and ChlB. Forms a heterotetramer of two ChlB and two ChlN subunits. Requires [4Fe-4S] cluster as cofactor.

The protein localises to the plastid. It localises to the chloroplast. The enzyme catalyses chlorophyllide a + oxidized 2[4Fe-4S]-[ferredoxin] + 2 ADP + 2 phosphate = protochlorophyllide a + reduced 2[4Fe-4S]-[ferredoxin] + 2 ATP + 2 H2O. It participates in porphyrin-containing compound metabolism; chlorophyll biosynthesis (light-independent). In terms of biological role, component of the dark-operative protochlorophyllide reductase (DPOR) that uses Mg-ATP and reduced ferredoxin to reduce ring D of protochlorophyllide (Pchlide) to form chlorophyllide a (Chlide). This reaction is light-independent. The NB-protein (ChlN-ChlB) is the catalytic component of the complex. In Porphyra purpurea (Red seaweed), this protein is Light-independent protochlorophyllide reductase subunit B.